Reading from the N-terminus, the 782-residue chain is LPS-assembly protein LptD (782 aa).

Positions 1–23 (MNKKHTLISLAILTALYSQQSLA) are cleaved as a signal peptide.

Belongs to the LptD family. As to quaternary structure, component of the lipopolysaccharide transport and assembly complex. Interacts with LptE and LptA.

The protein localises to the cell outer membrane. Together with LptE, is involved in the assembly of lipopolysaccharide (LPS) at the surface of the outer membrane. The polypeptide is LPS-assembly protein LptD (Haemophilus influenzae (strain ATCC 51907 / DSM 11121 / KW20 / Rd)).